A 448-amino-acid polypeptide reads, in one-letter code: Asparagine--tRNA ligase (448 aa).

Belongs to the class-II aminoacyl-tRNA synthetase family. In terms of assembly, homodimer.

The protein localises to the cytoplasm. It carries out the reaction tRNA(Asn) + L-asparagine + ATP = L-asparaginyl-tRNA(Asn) + AMP + diphosphate + H(+). The chain is Asparagine--tRNA ligase from Streptococcus thermophilus (strain ATCC BAA-250 / LMG 18311).